The following is a 200-amino-acid chain: Large ribosomal subunit protein uL29 (200 aa).

The tract at residues 1–107 is large ribosomal subunit protein uL29; it reads MTIAKELKQK…KQETKKAEVK (107 aa). Residues 92-200 form a disordered region; the sequence is STKPESKQET…KMIKTKEKKQ (109 aa). Positions 93–179 are enriched in basic and acidic residues; the sequence is TKPESKQETK…QEVKKVEAKK (87 aa). Residues 108 to 200 form a unknown region; the sequence is PKVESKPESK…KMIKTKEKKQ (93 aa). Residues 186–200 are compositionally biased toward basic residues; it reads KPVKAKMIKTKEKKQ.

The protein belongs to the universal ribosomal protein uL29 family.

This chain is Large ribosomal subunit protein uL29, found in Mycoplasma genitalium (strain ATCC 33530 / DSM 19775 / NCTC 10195 / G37) (Mycoplasmoides genitalium).